Reading from the N-terminus, the 137-residue chain is Transcription antitermination protein NusB (137 aa).

The protein belongs to the NusB family.

Involved in transcription antitermination. Required for transcription of ribosomal RNA (rRNA) genes. Binds specifically to the boxA antiterminator sequence of the ribosomal RNA (rrn) operons. This Aeromonas hydrophila subsp. hydrophila (strain ATCC 7966 / DSM 30187 / BCRC 13018 / CCUG 14551 / JCM 1027 / KCTC 2358 / NCIMB 9240 / NCTC 8049) protein is Transcription antitermination protein NusB.